The following is a 291-amino-acid chain: Elongation factor Ts (291 aa).

The involved in Mg(2+) ion dislocation from EF-Tu stretch occupies residues 79-82; sequence TDFV.

The protein belongs to the EF-Ts family.

It is found in the cytoplasm. Its function is as follows. Associates with the EF-Tu.GDP complex and induces the exchange of GDP to GTP. It remains bound to the aminoacyl-tRNA.EF-Tu.GTP complex up to the GTP hydrolysis stage on the ribosome. This is Elongation factor Ts from Anaplasma marginale (strain St. Maries).